A 366-amino-acid chain; its full sequence is DNA-directed RNA polymerase subunit alpha (366 aa).

The interval 1 to 260 is alpha N-terminal domain (alpha-NTD); sequence MAISDNGGGS…DQLQSFIGSE (260 aa). An alpha C-terminal domain (alpha-CTD) region spans residues 274-366; that stretch reads EGALPYDHNL…ENLSKQYSED (93 aa).

Belongs to the RNA polymerase alpha chain family. As to quaternary structure, homodimer. The RNAP catalytic core consists of 2 alpha, 1 beta, 1 beta' and 1 omega subunit. When a sigma factor is associated with the core the holoenzyme is formed, which can initiate transcription.

The enzyme catalyses RNA(n) + a ribonucleoside 5'-triphosphate = RNA(n+1) + diphosphate. Functionally, DNA-dependent RNA polymerase catalyzes the transcription of DNA into RNA using the four ribonucleoside triphosphates as substrates. This chain is DNA-directed RNA polymerase subunit alpha, found in Anaplasma marginale (strain St. Maries).